Here is a 71-residue protein sequence, read N- to C-terminus: Large ribosomal subunit protein eL38 (71 aa).

Belongs to the eukaryotic ribosomal protein eL38 family.

In Argas monolakensis (Mono lake bird tick), this protein is Large ribosomal subunit protein eL38 (RpL38).